Here is a 243-residue protein sequence, read N- to C-terminus: Adenosylcobinamide-GDP ribazoletransferase (243 aa).

The next 5 helical transmembrane spans lie at 31-51, 55-75, 109-129, 133-153, and 188-208; these read LLFY…FNTL, APLM…SGGL, IAVV…LALI, ASVW…GLFL, and VLLA…CFFW.

It belongs to the CobS family. Requires Mg(2+) as cofactor.

Its subcellular location is the cell inner membrane. The catalysed reaction is alpha-ribazole + adenosylcob(III)inamide-GDP = adenosylcob(III)alamin + GMP + H(+). It carries out the reaction alpha-ribazole 5'-phosphate + adenosylcob(III)inamide-GDP = adenosylcob(III)alamin 5'-phosphate + GMP + H(+). It participates in cofactor biosynthesis; adenosylcobalamin biosynthesis; adenosylcobalamin from cob(II)yrinate a,c-diamide: step 7/7. Functionally, joins adenosylcobinamide-GDP and alpha-ribazole to generate adenosylcobalamin (Ado-cobalamin). Also synthesizes adenosylcobalamin 5'-phosphate from adenosylcobinamide-GDP and alpha-ribazole 5'-phosphate. The chain is Adenosylcobinamide-GDP ribazoletransferase from Pseudomonas syringae pv. syringae (strain B728a).